A 306-amino-acid polypeptide reads, in one-letter code: Putative syntaxin-131 (306 aa).

Position 1 is an N-acetylmethionine (M1). The Cytoplasmic segment spans residues 1–276 (MNDLLKGSLE…AVKSQKSSRK (276 aa)). The segment covering 11-23 (FSRDRSNRSDIES) has biased composition (basic and acidic residues). Positions 11 to 35 (FSRDRSNRSDIESGHGPGNSGDLGL) are disordered. Coiled coils occupy residues 35–72 (LSGF…VTKA) and 134–162 (KKKF…VERR). A t-SNARE coiled-coil homology domain is found at 205–267 (LAEIQERHDA…QSGNNQLTKA (63 aa)). Residues 277 to 297 (WMCIAILILLIIIIITVISVL) form a helical; Anchor for type IV membrane protein membrane-spanning segment. At 298 to 306 (KPWTQKNGA) the chain is on the vesicular side.

This sequence belongs to the syntaxin family. Part of the t-SNARE complex.

The protein localises to the membrane. Its function is as follows. Vesicle trafficking protein that functions in the secretory pathway. The polypeptide is Putative syntaxin-131 (SYP131) (Arabidopsis thaliana (Mouse-ear cress)).